The following is a 295-amino-acid chain: ATP synthase gamma chain (295 aa).

The protein belongs to the ATPase gamma chain family. As to quaternary structure, F-type ATPases have 2 components, CF(1) - the catalytic core - and CF(0) - the membrane proton channel. CF(1) has five subunits: alpha(3), beta(3), gamma(1), delta(1), epsilon(1). CF(0) has three main subunits: a, b and c.

It localises to the cell inner membrane. Functionally, produces ATP from ADP in the presence of a proton gradient across the membrane. The gamma chain is believed to be important in regulating ATPase activity and the flow of protons through the CF(0) complex. This chain is ATP synthase gamma chain, found in Sulfurovum sp. (strain NBC37-1).